Reading from the N-terminus, the 104-residue chain is MAVKIRLARFGAKKRPFYRIVVADSRAPRDGRFIERIGQYDPMLPKDNKNRVVVKADRLKHWLSVGAQATERVMWFIKKGIVDLETESKKIEKKKVEKVQGQEA.

Belongs to the bacterial ribosomal protein bS16 family.

This chain is Small ribosomal subunit protein bS16, found in Wolbachia pipientis subsp. Culex pipiens (strain wPip).